A 196-amino-acid chain; its full sequence is Pro-FMRFamide-related neuropeptide VF (196 aa).

An N-terminal signal peptide occupies residues 1–26 (MEIISSKLFILLTLATSSLLTSNIFC). The propeptide occupies 27 to 55 (ADELVMSNLHSKENYDKYSEPRGYPKGER). Phenylalanine amide is present on phenylalanine 92. 2 consecutive propeptides follow at residues 95–99 (NVQEE) and 115–121 (NMEVSLV). Phenylalanine 131 bears the Phenylalanine amide mark. The propeptide occupies 134 to 196 (TTTAKSVCRM…IDDAELKQEK (63 aa)).

This sequence belongs to the FARP (FMRFamide related peptide) family. In terms of tissue distribution, specifically expressed in the retina. As to expression, detected in the hypothalamus.

The protein resides in the secreted. Its function is as follows. Efficiently inhibits forskolin-induced production of cAMP. Acts as a potent negative regulator of gonadotropin synthesis and secretion. Induces secretion of prolactin. Functionally, efficiently inhibits forskolin-induced production of cAMP. Blocks morphine-induced analgesia. Shows no inhibitory activity of forskolin-induced production of cAMP. The sequence is that of Pro-FMRFamide-related neuropeptide VF from Homo sapiens (Human).